A 1763-amino-acid polypeptide reads, in one-letter code: Genome polyprotein (1763 aa).

The SF3 helicase domain occupies 458-614 (DGVITSCNKR…ESHKRARPGT (157 aa)). Residue 484–491 (GPPGCGKT) coordinates ATP. Y984 is subject to O-(5'-phospho-RNA)-tyrosine. The 157-residue stretch at 1073–1229 (GPGTKFHKNA…KLVVPYVHID (157 aa)) folds into the Peptidase C24 domain. Residues H1110, E1131, and C1193 each act as for 3CLpro activity in the active site. The RdRp catalytic domain occupies 1478–1603 (AKVYAVDYSK…MFPTMFASIS (126 aa)).

As to quaternary structure, protein p32: Homodimer. Interacts with NTPase, protein p30 and protease-polymerase p76. In terms of assembly, interacts with capsid protein VP1 and protease-polymerase p76. Homooligomer. Interacts with Vpg, protein p32 and may interact with capsid protein VP1. Post-translationally, specific enzymatic cleavages in vivo yield mature proteins. Pro-Pol is first autocatalytically cleaved, then processes the whole polyprotein. VPg is uridylylated by the polymerase and is covalently attached to the 5'-end of the polyadenylated genomic and subgenomic RNAs. This uridylylated form acts as a nucleotide-peptide primer for the polymerase.

It carries out the reaction a ribonucleoside 5'-triphosphate + H2O = a ribonucleoside 5'-diphosphate + phosphate + H(+). It catalyses the reaction RNA(n) + a ribonucleoside 5'-triphosphate = RNA(n+1) + diphosphate. The catalysed reaction is Endopeptidase with a preference for cleavage when the P1 position is occupied by Glu-|-Xaa and the P1' position is occupied by Gly-|-Yaa.. NTPase presumably plays a role in replication. Despite having similarities with helicases, does not seem to display any helicase activity. Functionally, viral genome-linked protein is covalently linked to the 5'-end of the positive-strand, negative-strand genomic RNAs and subgenomic RNA. Acts as a genome-linked replication primer. May recruit ribosome to viral RNA thereby promoting viral proteins translation. Its function is as follows. The protease activity processes the polyprotein: Pro-Pol is first released by autocleavage, then all other proteins are cleaved. Cleaves host translation initiation factor eIF4G1, eIF4G2 and PABP1 thereby inducing a shutdown of host protein synthesis. This shutdown may not prevent viral mRNA from being translated since viral Vpg replaces the cap. May cleave host polyadenylate-binding protein thereby inhibiting cellular translation. Seems to act as a RNase and degrades host Pol II-driven mRNAs with the help of host XRN1. Inhibits the integrated stress response (ISR) in the infected cell by cleaving host G3BP1 and G3BP2. Stress granule formation is thus inhibited, which allows protein synthesis and viral replication. The RNA-directed RNA polymerase activity replicates genomic and antigenomic viral RNA by recognizing specific signals. Also transcribes a subgenomic mRNA by initiating RNA synthesis internally on antigenomic RNA. This sgRNA codes for structural proteins. Catalyzes the covalent attachment VPg with viral RNAs. In terms of biological role, selectively decays the mRNA of host interferon receptor IFNAR1. This is Genome polyprotein from Feline calicivirus (FCV).